A 324-amino-acid polypeptide reads, in one-letter code: Pyruvate synthase subunit PorB (324 aa).

Residues cysteine 26, cysteine 29, and cysteine 57 each contribute to the [4Fe-4S] cluster site. Residues 150–172 (TGNQRSGSTPPGSDTTTAPVGKK) form a disordered region. Positions 155-166 (SGSTPPGSDTTT) are enriched in low complexity. [4Fe-4S] cluster is bound at residue cysteine 228.

As to quaternary structure, heterotetramer of one alpha, one beta, one delta and one gamma chain. The cofactor is [4Fe-4S] cluster.

It carries out the reaction 2 oxidized [2Fe-2S]-[ferredoxin] + pyruvate + CoA = 2 reduced [2Fe-2S]-[ferredoxin] + acetyl-CoA + CO2 + H(+). The chain is Pyruvate synthase subunit PorB (porB) from Thermotoga maritima (strain ATCC 43589 / DSM 3109 / JCM 10099 / NBRC 100826 / MSB8).